A 156-amino-acid polypeptide reads, in one-letter code: Crossover junction endodeoxyribonuclease RuvC (156 aa).

Residues D7, E66, and D138 contribute to the active site. 3 residues coordinate Mg(2+): D7, E66, and D138.

This sequence belongs to the RuvC family. Homodimer which binds Holliday junction (HJ) DNA. The HJ becomes 2-fold symmetrical on binding to RuvC with unstacked arms; it has a different conformation from HJ DNA in complex with RuvA. In the full resolvosome a probable DNA-RuvA(4)-RuvB(12)-RuvC(2) complex forms which resolves the HJ. The cofactor is Mg(2+).

Its subcellular location is the cytoplasm. The enzyme catalyses Endonucleolytic cleavage at a junction such as a reciprocal single-stranded crossover between two homologous DNA duplexes (Holliday junction).. Functionally, the RuvA-RuvB-RuvC complex processes Holliday junction (HJ) DNA during genetic recombination and DNA repair. Endonuclease that resolves HJ intermediates. Cleaves cruciform DNA by making single-stranded nicks across the HJ at symmetrical positions within the homologous arms, yielding a 5'-phosphate and a 3'-hydroxyl group; requires a central core of homology in the junction. The consensus cleavage sequence is 5'-(A/T)TT(C/G)-3'. Cleavage occurs on the 3'-side of the TT dinucleotide at the point of strand exchange. HJ branch migration catalyzed by RuvA-RuvB allows RuvC to scan DNA until it finds its consensus sequence, where it cleaves and resolves the cruciform DNA. The protein is Crossover junction endodeoxyribonuclease RuvC of Ehrlichia canis (strain Jake).